The following is a 263-amino-acid chain: Endonuclease 8 (263 aa).

Proline 2 serves as the catalytic Schiff-base intermediate with DNA. The active-site Proton donor is glutamate 3. Lysine 53 (proton donor; for beta-elimination activity) is an active-site residue. Residues glutamine 70, arginine 125, and asparagine 169 each coordinate DNA. The FPG-type zinc-finger motif lies at 229–263; the sequence is KVFHRDGEPCERCGGIIEKTTLSSRPFYWCPGCQH. The active-site Proton donor; for delta-elimination activity is arginine 253.

It belongs to the FPG family. It depends on Zn(2+) as a cofactor.

It carries out the reaction 2'-deoxyribonucleotide-(2'-deoxyribose 5'-phosphate)-2'-deoxyribonucleotide-DNA = a 3'-end 2'-deoxyribonucleotide-(2,3-dehydro-2,3-deoxyribose 5'-phosphate)-DNA + a 5'-end 5'-phospho-2'-deoxyribonucleoside-DNA + H(+). Involved in base excision repair of DNA damaged by oxidation or by mutagenic agents. Acts as a DNA glycosylase that recognizes and removes damaged bases. Has a preference for oxidized pyrimidines, such as thymine glycol, 5,6-dihydrouracil and 5,6-dihydrothymine. Has AP (apurinic/apyrimidinic) lyase activity and introduces nicks in the DNA strand. Cleaves the DNA backbone by beta-delta elimination to generate a single-strand break at the site of the removed base with both 3'- and 5'-phosphates. This chain is Endonuclease 8, found in Escherichia coli O127:H6 (strain E2348/69 / EPEC).